A 380-amino-acid chain; its full sequence is Cytochrome b (380 aa).

The next 4 helical transmembrane spans lie at 34-54, 78-99, 114-134, and 179-199; these read FGSL…LLAA, WLIR…YLHI, WNTG…GYVL, and FFTL…IHLT. Residues H84 and H98 each contribute to the heme b site. Positions 183 and 197 each coordinate heme b. Residue H202 participates in a ubiquinone binding. 4 consecutive transmembrane segments (helical) span residues 227–247, 289–309, 321–341, and 348–368; these read TKDI…ALFS, LGGV…PLLH, LSQL…WIGS, and FIII…ILFP.

It belongs to the cytochrome b family. As to quaternary structure, the cytochrome bc1 complex contains 11 subunits: 3 respiratory subunits (MT-CYB, CYC1 and UQCRFS1), 2 core proteins (UQCRC1 and UQCRC2) and 6 low-molecular weight proteins (UQCRH/QCR6, UQCRB/QCR7, UQCRQ/QCR8, UQCR10/QCR9, UQCR11/QCR10 and a cleavage product of UQCRFS1). This cytochrome bc1 complex then forms a dimer. Heme b serves as cofactor.

It localises to the mitochondrion inner membrane. In terms of biological role, component of the ubiquinol-cytochrome c reductase complex (complex III or cytochrome b-c1 complex) that is part of the mitochondrial respiratory chain. The b-c1 complex mediates electron transfer from ubiquinol to cytochrome c. Contributes to the generation of a proton gradient across the mitochondrial membrane that is then used for ATP synthesis. The chain is Cytochrome b (MT-CYB) from Eudyptes chrysocome (Western rockhopper penguin).